Here is a 122-residue protein sequence, read N- to C-terminus: Large ribosomal subunit protein uL14 (122 aa).

It belongs to the universal ribosomal protein uL14 family. In terms of assembly, part of the 50S ribosomal subunit. Forms a cluster with proteins L3 and L19. In the 70S ribosome, L14 and L19 interact and together make contacts with the 16S rRNA in bridges B5 and B8.

In terms of biological role, binds to 23S rRNA. Forms part of two intersubunit bridges in the 70S ribosome. This is Large ribosomal subunit protein uL14 from Geobacillus kaustophilus (strain HTA426).